The primary structure comprises 325 residues: Beta-1,3-galactosyltransferase 6 (325 aa).

Topologically, residues M1–R11 are cytoplasmic. A helical; Signal-anchor for type II membrane protein transmembrane segment spans residues V12–A30. At R31–P325 the chain is on the lumenal side. N-linked (GlcNAc...) asparagine glycosylation is present at N127.

It belongs to the glycosyltransferase 31 family. Mn(2+) serves as cofactor.

It is found in the golgi apparatus. The protein resides in the golgi stack membrane. The catalysed reaction is 3-O-(beta-D-galactosyl-(1-&gt;4)-beta-D-xylosyl)-L-seryl-[protein] + UDP-alpha-D-galactose = 3-O-(beta-D-galactosyl-(1-&gt;3)-beta-D-galactosyl-(1-&gt;4)-beta-D-xylosyl)-L-seryl-[protein] + UDP + H(+). It functions in the pathway glycan metabolism; chondroitin sulfate biosynthesis. It participates in glycan metabolism; heparan sulfate biosynthesis. In terms of biological role, beta-1,3-galactosyltransferase that transfers galactose from UDP-galactose to substrates with a terminal beta-linked galactose residue. Has a preference for galactose-beta-1,4-xylose that is found in the linker region of glycosaminoglycans, such as heparan sulfate and chondroitin sulfate. Has no activity towards substrates with terminal glucosamine or galactosamine residues. This is Beta-1,3-galactosyltransferase 6 (B3galt6) from Mus musculus (Mouse).